A 255-amino-acid polypeptide reads, in one-letter code: Hydroxyacylglutathione hydrolase (255 aa).

Zn(2+)-binding residues include His59, His61, Asp63, His64, His118, Asp144, and His182.

This sequence belongs to the metallo-beta-lactamase superfamily. Glyoxalase II family. Monomer. It depends on Zn(2+) as a cofactor.

It catalyses the reaction an S-(2-hydroxyacyl)glutathione + H2O = a 2-hydroxy carboxylate + glutathione + H(+). It functions in the pathway secondary metabolite metabolism; methylglyoxal degradation; (R)-lactate from methylglyoxal: step 2/2. In terms of biological role, thiolesterase that catalyzes the hydrolysis of S-D-lactoyl-glutathione to form glutathione and D-lactic acid. The protein is Hydroxyacylglutathione hydrolase of Synechococcus sp. (strain WH7803).